The primary structure comprises 317 residues: Melanocyte-stimulating hormone receptor (317 aa).

Residues 1 to 37 (MPMQEPQRRLLDPFNSTRTGTPHLKLSANQTGPWCLH) are Extracellular-facing. Asparagine 15 and asparagine 29 each carry an N-linked (GlcNAc...) asparagine glycan. The helical transmembrane segment at 38 to 63 (VSIPDGLFLSLGLVSLVENVLVVISI) threads the bilayer. Topologically, residues 64–72 (AKNRNLHSP) are cytoplasmic. Residues 73 to 93 (MYYFICCLALSDLLVSVSIVL) traverse the membrane as a helical segment. At 94 to 118 (ETTLILVLEAGALATRVTVVQQLDN) the chain is on the extracellular side. Residues 119-140 (VIDVLICGSMVSSLCFLGAIAV) traverse the membrane as a helical segment. Topologically, residues 141 to 163 (DRYISIFYALRYHSIVTLPRARW) are cytoplasmic. A helical membrane pass occupies residues 164–183 (AIVAIWVASISSSTLFVAYY). The Extracellular portion of the chain corresponds to 184-191 (NHTAVLLC). The helical transmembrane segment at 192–211 (LVTFFLATLALMAVLYVHML) threads the bilayer. The Cytoplasmic segment spans residues 212–240 (ARAHQHAQAIAQLHKRQHLVHQGFRLKGA). Residues 241–266 (ATLTILLGIFFLCWGPFFLYLTLIVL) form a helical membrane-spanning segment. Over 267–279 (CPKHPTCSCFFKN) the chain is Extracellular. A helical transmembrane segment spans residues 280–300 (LNLFLALIIFNSIVDPLIYAF). Over 301–317 (RSQELRMTLKEVLLCSW) the chain is Cytoplasmic. The S-palmitoyl cysteine moiety is linked to residue cysteine 315.

It belongs to the G-protein coupled receptor 1 family. As to quaternary structure, interacts with MGRN1, but does not undergo MGRN1-mediated ubiquitination; this interaction competes with GNAS-binding and thus inhibits agonist-induced cAMP production. Interacts with OPN3; the interaction results in a decrease in MC1R-mediated cAMP signaling and ultimately a decrease in melanin production in melanocytes.

Its subcellular location is the cell membrane. Its function is as follows. Receptor for MSH (alpha, beta and gamma) and ACTH. The activity of this receptor is mediated by G proteins which activate adenylate cyclase. Mediates melanogenesis, the production of eumelanin (black/brown) and phaeomelanin (red/yellow), via regulation of cAMP signaling in melanocytes. The chain is Melanocyte-stimulating hormone receptor (MC1R) from Chaetodipus baileyi (Bailey's pocket mouse).